We begin with the raw amino-acid sequence, 639 residues long: Polyphenol oxidase, chloroplastic (639 aa).

A chloroplast-targeting transit peptide spans 1–101 (MATLSSPTII…EGANYYNTLA (101 aa)). Residues 35 to 58 (GVRSVNGKVSCQTKNNNGNDENNQ) form a disordered region. Intrachain disulfides connect Cys111/Cys127 and Cys126/Cys194. Residues His193, His214, His223, His354, His358, and His388 each coordinate Cu cation. The segment at residues 197–214 (CDGSYPVLGHNDTRLEVH) is a cross-link (2'-(S-cysteinyl)-histidine (Cys-His)).

It belongs to the tyrosinase family. It depends on Cu(2+) as a cofactor.

It localises to the plastid. The protein localises to the chloroplast thylakoid lumen. It catalyses the reaction 2 catechol + O2 = 2 1,2-benzoquinone + 2 H2O. Catalyzes the oxidation of mono- and o-diphenols to o-diquinones. This is Polyphenol oxidase, chloroplastic from Spinacia oleracea (Spinach).